We begin with the raw amino-acid sequence, 457 residues long: Probable xyloglucan 6-xylosyltransferase 5 (457 aa).

Positions Met-1–Gly-40 are disordered. The Cytoplasmic segment spans residues Met-1 to Lys-51. Positions Asn-26–Leu-37 are enriched in gly residues. A helical; Signal-anchor for type II membrane protein membrane pass occupies residues Ile-52–Asn-72. Residues Leu-73–Asn-457 are Lumenal-facing. Positions Arg-97–Asn-116 are disordered. Acidic residues predominate over residues Asp-101 to Glu-110. Asn-116 and Asn-432 each carry an N-linked (GlcNAc...) asparagine glycan.

Belongs to the glycosyltransferase 34 family. As to quaternary structure, interacts with XXT2 and CSLC4. Interacts with FUT1 and XLT2. As to expression, highly expressed in roots, stems and cauline leaves, and at lower levels in rosette leaves, flowers and siliques.

It localises to the golgi apparatus membrane. The enzyme catalyses Transfers an alpha-D-xylosyl residue from UDP-D-xylose to a glucose residue in xyloglucan, forming an alpha-(1-&gt;6)-D-xylosyl-D-glucose linkage.. Probable xyloglucan xylosyltransferase involved in the biosynthesis of xyloglucan in roots. May act in association with XXT1 and XXT2. Associates with other xyloglucan-synthesizing enzymes to form multiprotein complexes for xyloglucan synthesis in the Golgi. The polypeptide is Probable xyloglucan 6-xylosyltransferase 5 (Arabidopsis thaliana (Mouse-ear cress)).